A 253-amino-acid polypeptide reads, in one-letter code: NADH-quinone oxidoreductase subunit C (253 aa).

Disordered stretches follow at residues Met1–Pro33 and Ile234–Ser253.

The protein belongs to the complex I 30 kDa subunit family. In terms of assembly, NDH-1 is composed of 14 different subunits. Subunits NuoB, C, D, E, F, and G constitute the peripheral sector of the complex.

The protein localises to the cell membrane. It catalyses the reaction a quinone + NADH + 5 H(+)(in) = a quinol + NAD(+) + 4 H(+)(out). In terms of biological role, NDH-1 shuttles electrons from NADH, via FMN and iron-sulfur (Fe-S) centers, to quinones in the respiratory chain. The immediate electron acceptor for the enzyme in this species is believed to be a menaquinone. Couples the redox reaction to proton translocation (for every two electrons transferred, four hydrogen ions are translocated across the cytoplasmic membrane), and thus conserves the redox energy in a proton gradient. This chain is NADH-quinone oxidoreductase subunit C, found in Nocardia farcinica (strain IFM 10152).